We begin with the raw amino-acid sequence, 228 residues long: UPF0173 metal-dependent hydrolase lin1612 (228 aa).

The protein belongs to the UPF0173 family.

The polypeptide is UPF0173 metal-dependent hydrolase lin1612 (Listeria innocua serovar 6a (strain ATCC BAA-680 / CLIP 11262)).